The sequence spans 178 residues: tRNA (cytidine(56)-2'-O)-methyltransferase (178 aa).

S-adenosyl-L-methionine is bound by residues Leu84, 109–113 (GAEKV), and 127–134 (IGNQPHSE).

The protein belongs to the aTrm56 family. As to quaternary structure, homodimer.

The protein resides in the cytoplasm. The enzyme catalyses cytidine(56) in tRNA + S-adenosyl-L-methionine = 2'-O-methylcytidine(56) in tRNA + S-adenosyl-L-homocysteine + H(+). Its function is as follows. Specifically catalyzes the AdoMet-dependent 2'-O-ribose methylation of cytidine at position 56 in tRNAs. This Methanococcoides burtonii (strain DSM 6242 / NBRC 107633 / OCM 468 / ACE-M) protein is tRNA (cytidine(56)-2'-O)-methyltransferase.